Here is a 283-residue protein sequence, read N- to C-terminus: MLRIAVPNKGMLSEPAWNMLAEAGYRLRTNPRQLVVQDPDNGIELFYLRPLDIAVYVGRGAIDVGITGQDLLKNSGTAALEHMPLGFGASTFRFAAPNESPITTLEDVQGKRVATTFDKLVHDYLVEHGIQAETIHLDGAVESSVQLGVADLIADVVSTGTTLRNAGLRVFAEPLMHSEACLIRSPRLNEQDPRLAVLTRRLQGVLTAHQYVLMDYDIPISKVAAAVAVTPGFESPTISPLHDKQWNAVRVMVPKAKVNQLMDDLYEVGARGIIVTALQASRM.

It belongs to the ATP phosphoribosyltransferase family. Long subfamily. Mg(2+) serves as cofactor.

It is found in the cytoplasm. It carries out the reaction 1-(5-phospho-beta-D-ribosyl)-ATP + diphosphate = 5-phospho-alpha-D-ribose 1-diphosphate + ATP. The protein operates within amino-acid biosynthesis; L-histidine biosynthesis; L-histidine from 5-phospho-alpha-D-ribose 1-diphosphate: step 1/9. Feedback inhibited by histidine. Its function is as follows. Catalyzes the condensation of ATP and 5-phosphoribose 1-diphosphate to form N'-(5'-phosphoribosyl)-ATP (PR-ATP). Has a crucial role in the pathway because the rate of histidine biosynthesis seems to be controlled primarily by regulation of HisG enzymatic activity. This is ATP phosphoribosyltransferase from Bifidobacterium longum (strain DJO10A).